The primary structure comprises 537 residues: Glutamate--tRNA ligase (537 aa).

Residues 9-19 (PSPTGLQHIGG) carry the 'HIGH' region motif. Zn(2+) contacts are provided by Cys125, Cys127, Cys152, and Glu154. The short motif at 270–274 (KLSKR) is the 'KMSKS' region element. Lys273 contributes to the ATP binding site.

Belongs to the class-I aminoacyl-tRNA synthetase family. Glutamate--tRNA ligase type 1 subfamily. As to quaternary structure, monomer. It depends on Zn(2+) as a cofactor.

The protein resides in the cytoplasm. The catalysed reaction is tRNA(Glu) + L-glutamate + ATP = L-glutamyl-tRNA(Glu) + AMP + diphosphate. Functionally, catalyzes the attachment of glutamate to tRNA(Glu) in a two-step reaction: glutamate is first activated by ATP to form Glu-AMP and then transferred to the acceptor end of tRNA(Glu). The sequence is that of Glutamate--tRNA ligase from Treponema pallidum (strain Nichols).